Reading from the N-terminus, the 414-residue chain is 2,3-bisphosphoglycerate-independent phosphoglycerate mutase (414 aa).

This sequence belongs to the BPG-independent phosphoglycerate mutase family. A-PGAM subfamily.

The catalysed reaction is (2R)-2-phosphoglycerate = (2R)-3-phosphoglycerate. Its pathway is carbohydrate degradation; glycolysis; pyruvate from D-glyceraldehyde 3-phosphate: step 3/5. Functionally, catalyzes the interconversion of 2-phosphoglycerate and 3-phosphoglycerate. In Saccharolobus islandicus (strain L.S.2.15 / Lassen #1) (Sulfolobus islandicus), this protein is 2,3-bisphosphoglycerate-independent phosphoglycerate mutase.